The following is a 264-amino-acid chain: 3-methyl-2-oxobutanoate hydroxymethyltransferase (264 aa).

Mg(2+) contacts are provided by aspartate 45 and aspartate 84. 3-methyl-2-oxobutanoate contacts are provided by residues aspartate 45 to serine 46, aspartate 84, and lysine 112. Glutamate 114 contacts Mg(2+). Glutamate 181 (proton acceptor) is an active-site residue.

Belongs to the PanB family. In terms of assembly, homodecamer; pentamer of dimers. Mg(2+) serves as cofactor.

The protein localises to the cytoplasm. It catalyses the reaction 3-methyl-2-oxobutanoate + (6R)-5,10-methylene-5,6,7,8-tetrahydrofolate + H2O = 2-dehydropantoate + (6S)-5,6,7,8-tetrahydrofolate. Its pathway is cofactor biosynthesis; (R)-pantothenate biosynthesis; (R)-pantoate from 3-methyl-2-oxobutanoate: step 1/2. Its function is as follows. Catalyzes the reversible reaction in which hydroxymethyl group from 5,10-methylenetetrahydrofolate is transferred onto alpha-ketoisovalerate to form ketopantoate. The chain is 3-methyl-2-oxobutanoate hydroxymethyltransferase from Shewanella putrefaciens (strain CN-32 / ATCC BAA-453).